The primary structure comprises 82 residues: Translational regulator CsrA (82 aa).

It belongs to the CsrA/RsmA family. As to quaternary structure, homodimer; the beta-strands of each monomer intercalate to form a hydrophobic core, while the alpha-helices form wings that extend away from the core.

The protein localises to the cytoplasm. Its function is as follows. A translational regulator that binds mRNA to regulate translation initiation and/or mRNA stability. Usually binds in the 5'-UTR at or near the Shine-Dalgarno sequence preventing ribosome-binding, thus repressing translation. Its main target seems to be the major flagellin gene, while its function is anatagonized by FliW. This Brachyspira hyodysenteriae (strain ATCC 49526 / WA1) protein is Translational regulator CsrA.